Consider the following 99-residue polypeptide: Small integral membrane protein 9 (99 aa).

A signal peptide spans 1–26 (MEPQKLLIIGFLLCSLTCLLLETVAS). The Extracellular portion of the chain corresponds to 27 to 73 (SPLPLSALGIQEKTGSKPRSGGNHRSWLNNFRDYLWQLIKSALPPAA). A helical transmembrane segment spans residues 74–94 (IVAFLLTSALMGILCCFTILV). Residues 95 to 99 (VDPVH) are Cytoplasmic-facing.

Its subcellular location is the cell membrane. The sequence is that of Small integral membrane protein 9 (SMIM9) from Homo sapiens (Human).